An 88-amino-acid chain; its full sequence is Cell division topological specificity factor (88 aa).

The protein belongs to the MinE family.

In terms of biological role, prevents the cell division inhibition by proteins MinC and MinD at internal division sites while permitting inhibition at polar sites. This ensures cell division at the proper site by restricting the formation of a division septum at the midpoint of the long axis of the cell. The sequence is that of Cell division topological specificity factor from Methylibium petroleiphilum (strain ATCC BAA-1232 / LMG 22953 / PM1).